The chain runs to 267 residues: Small ribosomal subunit protein uS3 (267 aa).

The 69-residue stretch at 38-106 (IRKLLATGME…QVQLNILEVK (69 aa)) folds into the KH type-2 domain. The interval 215–267 (TAASAPAGDRDRPRRERPSRPRRSGSTGTTATSTEAGRAATAVVEAPAENQEG) is disordered. Positions 222 to 233 (GDRDRPRRERPS) are enriched in basic and acidic residues. Low complexity predominate over residues 238 to 256 (SGSTGTTATSTEAGRAATA).

The protein belongs to the universal ribosomal protein uS3 family. Part of the 30S ribosomal subunit. Forms a tight complex with proteins S10 and S14.

In terms of biological role, binds the lower part of the 30S subunit head. Binds mRNA in the 70S ribosome, positioning it for translation. This Nocardia farcinica (strain IFM 10152) protein is Small ribosomal subunit protein uS3.